The sequence spans 327 residues: Tagatose 1,6-diphosphate aldolase 2 (327 aa).

This sequence belongs to the aldolase LacD family.

The catalysed reaction is D-tagatofuranose 1,6-bisphosphate = D-glyceraldehyde 3-phosphate + dihydroxyacetone phosphate. Its pathway is carbohydrate metabolism; D-tagatose 6-phosphate degradation; D-glyceraldehyde 3-phosphate and glycerone phosphate from D-tagatose 6-phosphate: step 2/2. The sequence is that of Tagatose 1,6-diphosphate aldolase 2 (lacD2) from Streptococcus pyogenes serotype M3 (strain ATCC BAA-595 / MGAS315).